The primary structure comprises 316 residues: MDVLLANPRGFCAGVDRAIEIVKRAIETLGAPIYVRHEVVHNRFVVDDLKQRGAIFVEELDEVPDDATVIFSAHGVSQAVRVEAERRGLKVFDATCPLVTKVHFEVARHCRAGRDVVLIGHAGHPEVEGTMGQWSRERGPGQIYLVEDIEQVATLQVRQPENLAYTTQTTLSVDDTMGIIEALRVRYPAMQGPKHDDICYATQNRQDAVRDLARQCDLVLVVGSPNSSNSNRLSELARRDGVESYLIDNASEIDPAWIVGKQHIGLTAGASAPQVLVDGVLARLRELGANGVSELAGEPESMVFALPKELRLRLVS.

A [4Fe-4S] cluster-binding site is contributed by cysteine 12. (2E)-4-hydroxy-3-methylbut-2-enyl diphosphate is bound by residues histidine 41 and histidine 74. Residues histidine 41 and histidine 74 each coordinate dimethylallyl diphosphate. 2 residues coordinate isopentenyl diphosphate: histidine 41 and histidine 74. Cysteine 96 is a binding site for [4Fe-4S] cluster. Position 124 (histidine 124) interacts with (2E)-4-hydroxy-3-methylbut-2-enyl diphosphate. Histidine 124 is a dimethylallyl diphosphate binding site. Histidine 124 contacts isopentenyl diphosphate. Residue glutamate 126 is the Proton donor of the active site. Threonine 169 provides a ligand contact to (2E)-4-hydroxy-3-methylbut-2-enyl diphosphate. Cysteine 199 contributes to the [4Fe-4S] cluster binding site. (2E)-4-hydroxy-3-methylbut-2-enyl diphosphate-binding residues include serine 227, serine 228, asparagine 229, and serine 271. Serine 227, serine 228, asparagine 229, and serine 271 together coordinate dimethylallyl diphosphate. Isopentenyl diphosphate contacts are provided by serine 227, serine 228, asparagine 229, and serine 271.

Belongs to the IspH family. Requires [4Fe-4S] cluster as cofactor.

It catalyses the reaction isopentenyl diphosphate + 2 oxidized [2Fe-2S]-[ferredoxin] + H2O = (2E)-4-hydroxy-3-methylbut-2-enyl diphosphate + 2 reduced [2Fe-2S]-[ferredoxin] + 2 H(+). The enzyme catalyses dimethylallyl diphosphate + 2 oxidized [2Fe-2S]-[ferredoxin] + H2O = (2E)-4-hydroxy-3-methylbut-2-enyl diphosphate + 2 reduced [2Fe-2S]-[ferredoxin] + 2 H(+). The protein operates within isoprenoid biosynthesis; dimethylallyl diphosphate biosynthesis; dimethylallyl diphosphate from (2E)-4-hydroxy-3-methylbutenyl diphosphate: step 1/1. It participates in isoprenoid biosynthesis; isopentenyl diphosphate biosynthesis via DXP pathway; isopentenyl diphosphate from 1-deoxy-D-xylulose 5-phosphate: step 6/6. Functionally, catalyzes the conversion of 1-hydroxy-2-methyl-2-(E)-butenyl 4-diphosphate (HMBPP) into a mixture of isopentenyl diphosphate (IPP) and dimethylallyl diphosphate (DMAPP). Acts in the terminal step of the DOXP/MEP pathway for isoprenoid precursor biosynthesis. This Xanthomonas campestris pv. campestris (strain 8004) protein is 4-hydroxy-3-methylbut-2-enyl diphosphate reductase.